We begin with the raw amino-acid sequence, 1269 residues long: Clustered mitochondria protein homolog (1269 aa).

The 256-residue stretch at proline 297–valine 552 folds into the Clu domain. Residues glutamate 958–alanine 969 show a composition bias toward basic and acidic residues. Residues glutamate 958 to glutamate 989 form a disordered region. TPR repeat units follow at residues valine 1020–cysteine 1053 and glycine 1147–glutamate 1180. A disordered region spans residues leucine 1211–asparagine 1269. Residues serine 1213–isoleucine 1223 show a composition bias toward polar residues. Residues serine 1258–asparagine 1269 show a composition bias toward basic residues.

Belongs to the CLU family. May associate with the eukaryotic translation initiation factor 3 (eIF-3) complex.

The protein resides in the cytoplasm. Its function is as follows. mRNA-binding protein involved in proper cytoplasmic distribution of mitochondria. The polypeptide is Clustered mitochondria protein homolog (Kluyveromyces lactis (strain ATCC 8585 / CBS 2359 / DSM 70799 / NBRC 1267 / NRRL Y-1140 / WM37) (Yeast)).